We begin with the raw amino-acid sequence, 716 residues long: Polycystin-2 (716 aa).

Composition is skewed to basic and acidic residues over residues 1–10 (MNYGAADERW) and 30–41 (MVSEEYEHDKKK). Positions 1–44 (MNYGAADERWANPPQPVAAAEHGPSFDHSMVSEEYEHDKKKNPA) are disordered. Topologically, residues 1 to 72 (MNYGAADERW…SDGKIKLTAR (72 aa)) are cytoplasmic. Residues 73-93 (SFMEVGGYAVFLIVLVYVAFA) traverse the membrane as a helical segment. The Extracellular portion of the chain corresponds to 94–324 (QNSIQSYYYS…YQTSGGTRMM (231 aa)). N-linked (GlcNAc...) asparagine glycosylation is found at Asn-150 and Asn-177. Cys-180 and Cys-193 form a disulfide bridge. The helical transmembrane segment at 325–345 (IFEGIFCGFILYFIFEELFAI) threads the bilayer. At 346–355 (GRHRLHYLTQ) the chain is on the cytoplasmic side. A helical transmembrane segment spans residues 356–376 (FWNLVDVVLLGFSVATIILSV). The N-linked (GlcNAc...) asparagine glycan is linked to Asn-377. Residues 377 to 409 (NRTKTGVNRVNSVIENGLTNAPFDDVTSSENSY) lie on the Extracellular side of the membrane. Residues 410-430 (LNIKACVVFVAWVKVFKFISV) form a helical membrane-spanning segment. Residues 431 to 447 (NKTMSQLSSTLTRSAKD) lie on the Cytoplasmic side of the membrane. A helical transmembrane segment spans residues 448–468 (IGGFAVMFAVFFFAFAQFGYL). The Extracellular segment spans residues 469–482 (CFGTQIADYSNLYN). An intramembrane region (pore-forming) is located at residues 483-497 (SAFALLRLILGDFNF). The Extracellular portion of the chain corresponds to 498–510 (SALESCNRFFGPA). Residues 511–531 (FFIAYVFFVSFILLNMFLAII) traverse the membrane as a helical segment. Topologically, residues 532-716 (NDSYVEVKAE…ITSIADKKEE (185 aa)) are cytoplasmic. At Ser-534 the chain carries Phosphoserine; by CK2. Residues 613–680 (EKVAEDIADE…IEKQRVQQQD (68 aa)) adopt a coiled-coil conformation. The disordered stretch occupies residues 696–716 (RNRESAARRPTITSIADKKEE).

Belongs to the polycystin family. Phosphorylated. CK2 (kin-3 and kin-10) and calcineurin act antagonistically to regulate the phosphorylation state. As to expression, exclusively expressed in a subset of 3 categories of adult male sensory neurons: ray neurons, hook neurons and head cephalic (CEM) neurons. Expressed in the male tail.

The protein resides in the cell membrane. Its subcellular location is the cell projection. It localises to the cilium membrane. It is found in the cilium. The protein localises to the axon. The protein resides in the dendrite. Its subcellular location is the perikaryon. It localises to the endoplasmic reticulum membrane. In terms of biological role, functions as a calcium permeable cation channel. Required for 2 aspects of male mating behavior: response to hermaphrodite contact and vulva location. Acts in the same pathway as lov-1 and atp-2 in response behavior. The sequence is that of Polycystin-2 from Caenorhabditis elegans.